The chain runs to 84 residues: MASSKNGTVLFVSLMILLLISTGVKAYCERVRSRSAPHDICKKKNGNAVCKEKCWTIEKYQNGRCLILPKTTKLDCYCYHFDQC.

The N-terminal stretch at 1–26 (MASSKNGTVLFVSLMILLLISTGVKA) is a signal peptide. Disulfide bonds link C28–C84, C41–C65, C50–C76, and C54–C78.

This sequence belongs to the DEFL family.

The protein resides in the secreted. This chain is Putative defensin-like protein 38, found in Arabidopsis thaliana (Mouse-ear cress).